Consider the following 266-residue polypeptide: Dihydropteroate synthase (266 aa).

The Pterin-binding domain occupies 12–260 (AAIMGILNVT…DVKANQDIVA (249 aa)). Asn-19 provides a ligand contact to Mg(2+). (7,8-dihydropterin-6-yl)methyl diphosphate is bound by residues Thr-59, Asp-93, Asn-112, Asp-176, Lys-212, and 248 to 250 (RVH).

This sequence belongs to the DHPS family. In terms of assembly, homodimer or homotrimer. The cofactor is Mg(2+).

It catalyses the reaction (7,8-dihydropterin-6-yl)methyl diphosphate + 4-aminobenzoate = 7,8-dihydropteroate + diphosphate. It functions in the pathway cofactor biosynthesis; tetrahydrofolate biosynthesis; 7,8-dihydrofolate from 2-amino-4-hydroxy-6-hydroxymethyl-7,8-dihydropteridine diphosphate and 4-aminobenzoate: step 1/2. Functionally, catalyzes the condensation of para-aminobenzoate (pABA) with 6-hydroxymethyl-7,8-dihydropterin diphosphate (DHPt-PP) to form 7,8-dihydropteroate (H2Pte), the immediate precursor of folate derivatives. This Streptococcus pyogenes serotype M1 protein is Dihydropteroate synthase (folP).